The primary structure comprises 188 residues: Elongation factor P (188 aa).

This sequence belongs to the elongation factor P family.

It is found in the cytoplasm. It functions in the pathway protein biosynthesis; polypeptide chain elongation. Involved in peptide bond synthesis. Stimulates efficient translation and peptide-bond synthesis on native or reconstituted 70S ribosomes in vitro. Probably functions indirectly by altering the affinity of the ribosome for aminoacyl-tRNA, thus increasing their reactivity as acceptors for peptidyl transferase. This chain is Elongation factor P, found in Anaplasma marginale (strain St. Maries).